We begin with the raw amino-acid sequence, 327 residues long: Polyadenylate-binding protein-interacting protein 9 (327 aa).

The PAM2-like signature appears at 59-69; the sequence is KLNPLAKEFFP. Over residues 97-113 the composition is skewed to basic and acidic residues; that stretch reads KQSGEEFDLDAKKDDNT. A disordered region spans residues 97–132; it reads KQSGEEFDLDAKKDDNTRKRRNYSQGRRRLTGRISK. Residues 114–125 carry the Bipartite nuclear localization signal motif; the sequence is RKRRNYSQGRRR. A compositionally biased stretch (basic residues) spans 114–127; it reads RKRRNYSQGRRRLT. RRM domains are found at residues 141 to 216 and 238 to 314; these read RTVY…PSKT and RTIY…PSKT. Positions 308–327 are disordered; the sequence is RVSPSKTPVRPRITRPPSTN.

It is found in the nucleus. The sequence is that of Polyadenylate-binding protein-interacting protein 9 (CID9) from Arabidopsis thaliana (Mouse-ear cress).